The chain runs to 433 residues: Enolase (433 aa).

Residue Q167 participates in (2R)-2-phosphoglycerate binding. Catalysis depends on E209, which acts as the Proton donor. Residues D246, E291, and D318 each coordinate Mg(2+). (2R)-2-phosphoglycerate contacts are provided by K343, R372, S373, and K394. The Proton acceptor role is filled by K343.

This sequence belongs to the enolase family. Component of the RNA degradosome, a multiprotein complex involved in RNA processing and mRNA degradation. Requires Mg(2+) as cofactor.

The protein resides in the cytoplasm. Its subcellular location is the secreted. It localises to the cell surface. It catalyses the reaction (2R)-2-phosphoglycerate = phosphoenolpyruvate + H2O. The protein operates within carbohydrate degradation; glycolysis; pyruvate from D-glyceraldehyde 3-phosphate: step 4/5. Functionally, catalyzes the reversible conversion of 2-phosphoglycerate (2-PG) into phosphoenolpyruvate (PEP). It is essential for the degradation of carbohydrates via glycolysis. This chain is Enolase, found in Aeromonas salmonicida (strain A449).